Consider the following 158-residue polypeptide: Kalata-B3/B6 (158 aa).

The signal sequence occupies residues 1 to 22 (MAKFTKSLVLCLLLAAFVGAFG). Residues 23–66 (AELSEADKANVVNEIAANIQREILKGVKSSETTLTMFLKEMQLK) constitute a propeptide that is removed on maturation. Residues 67 to 96 (GLPTCGETCFGGTCNTPGCSCSSWPICTRN) constitute a cross-link (cyclopeptide (Gly-Asn)). Disulfide bonds link Cys71–Cys85, Cys75–Cys87, and Cys80–Cys93. Positions 97 to 121 (GLPKRAGVKSSETTLTMFLKEMQLK) are excised as a propeptide. Residues 122-151 (GLPTCGETCFGGTCNTPGCTCDPWPICTRD) constitute a cross-link (cyclopeptide (Gly-Asp)). 3 disulfides stabilise this stretch: Cys126–Cys140, Cys130–Cys142, and Cys135–Cys148. The propeptide occupies 152 to 158 (GLPSAAA).

It belongs to the cyclotide family. Moebius subfamily. In terms of processing, kalata-B3 and kalata-B6 are cyclic peptides.

Probably participates in a plant defense mechanism. Has hemolytic activity. This chain is Kalata-B3/B6 (OAK2), found in Oldenlandia affinis.